Reading from the N-terminus, the 79-residue chain is Acyl carrier protein (79 aa).

The region spanning 2-77 (STIEERVKKI…QAIDYVKSHV (76 aa)) is the Carrier domain. Ser37 is modified (O-(pantetheine 4'-phosphoryl)serine).

The protein belongs to the acyl carrier protein (ACP) family. In terms of processing, 4'-phosphopantetheine is transferred from CoA to a specific serine of apo-ACP by AcpS. This modification is essential for activity because fatty acids are bound in thioester linkage to the sulfhydryl of the prosthetic group.

It is found in the cytoplasm. The protein operates within lipid metabolism; fatty acid biosynthesis. Its function is as follows. Carrier of the growing fatty acid chain in fatty acid biosynthesis. The chain is Acyl carrier protein from Xanthomonas oryzae pv. oryzae (strain MAFF 311018).